Consider the following 277-residue polypeptide: NH(3)-dependent NAD(+) synthetase (277 aa).

Residue 36 to 43 participates in ATP binding; sequence GLSGGIDS. Mg(2+) is bound at residue Asp-42. Arg-118 lines the deamido-NAD(+) pocket. Thr-138 is a binding site for ATP. Glu-143 serves as a coordination point for Mg(2+). ATP is bound by residues Lys-167 and Ser-189.

This sequence belongs to the NAD synthetase family. In terms of assembly, homodimer.

It catalyses the reaction deamido-NAD(+) + NH4(+) + ATP = AMP + diphosphate + NAD(+) + H(+). Its pathway is cofactor biosynthesis; NAD(+) biosynthesis; NAD(+) from deamido-NAD(+) (ammonia route): step 1/1. Functionally, catalyzes the ATP-dependent amidation of deamido-NAD to form NAD. Uses ammonia as a nitrogen source. In Chlorobium phaeobacteroides (strain BS1), this protein is NH(3)-dependent NAD(+) synthetase.